Here is a 209-residue protein sequence, read N- to C-terminus: Thymidine kinase (209 aa).

ATP-binding positions include 9-16 (AAMNAGKS) and 88-91 (DEAQ). E89 (proton acceptor) is an active-site residue. Positions 146, 148, 183, and 186 each coordinate Zn(2+).

The protein belongs to the thymidine kinase family. In terms of assembly, homotetramer.

It is found in the cytoplasm. The catalysed reaction is thymidine + ATP = dTMP + ADP + H(+). This Legionella pneumophila subsp. pneumophila (strain Philadelphia 1 / ATCC 33152 / DSM 7513) protein is Thymidine kinase.